A 183-amino-acid polypeptide reads, in one-letter code: UPF0200 protein Memar_1556 (183 aa).

Residue 8–15 (GMPASGKG) coordinates ATP.

It belongs to the UPF0200 family.

The protein is UPF0200 protein Memar_1556 of Methanoculleus marisnigri (strain ATCC 35101 / DSM 1498 / JR1).